The following is a 147-amino-acid chain: UPF0208 membrane protein SO_2914 (147 aa).

2 helical membrane-spanning segments follow: residues 40 to 60 (LAIL…LYTY) and 68 to 88 (ALTI…WLGW).

The protein belongs to the UPF0208 family.

It is found in the cell inner membrane. The sequence is that of UPF0208 membrane protein SO_2914 from Shewanella oneidensis (strain ATCC 700550 / JCM 31522 / CIP 106686 / LMG 19005 / NCIMB 14063 / MR-1).